A 925-amino-acid polypeptide reads, in one-letter code: GPI ethanolamine phosphate transferase 1 (925 aa).

At 1 to 6 the chain is on the cytoplasmic side; sequence MWNKHR. A helical membrane pass occupies residues 7–27; the sequence is LAFILVGLLFHLFYLRSIFDI. Over 28 to 457 the chain is Lumenal; that stretch reads YFVSPLVHGM…TTYNWRFIRS (430 aa). N90, N138, N198, N286, N312, and N358 each carry an N-linked (GlcNAc...) asparagine glycan. Residues 458-478 form a helical membrane-spanning segment; that stretch reads IVTLGFIGWITYSFTIFLRLF. Residues 479–492 are Cytoplasmic-facing; that stretch reads ILEKQYAMKTSPQN. The chain crosses the membrane as a helical span at residues 493–510; that stretch reads LASFGALTAALNYVLYYQ. The Lumenal portion of the chain corresponds to 511 to 516; sequence RSPFNY. A helical transmembrane segment spans residues 517–537; that stretch reads YMYLLFPLFFWSQILTNSTIL. Over 538–547 the chain is Cytoplasmic; it reads HDGIREMFKG. The chain crosses the membrane as a helical span at residues 548–568; the sequence is VSMLQRIGICALIVSIYEGIV. Topologically, residues 569-574 are lumenal; sequence YGYFDR. Residues 575 to 595 traverse the membrane as a helical segment; the sequence is WIFTIIFNLLALYPFFCGIKD. Topologically, residues 596–599 are cytoplasmic; sequence AKTN. Residues 600-620 traverse the membrane as a helical segment; the sequence is MFWGANSMALSIFTLFDAVKI. Position 621 (E621) is a topological domain, lumenal. Residues 622-642 traverse the membrane as a helical segment; the sequence is SLTQINVSGLLLVASGLYALW. The Cytoplasmic portion of the chain corresponds to 643-653; the sequence is RVSKKINSHTK. The helical transmembrane segment at 654-674 threads the bilayer; sequence IVILLQILLLAMMLAVTNKSV. Residues 675 to 687 are Lumenal-facing; sequence TSLQQRAGLPTDA. A helical transmembrane segment spans residues 688–708; sequence KIAGWVILTLSLSLMPLLHYL. The Cytoplasmic portion of the chain corresponds to 709-719; sequence KPSNDYQVRVL. The helical transmembrane segment at 720 to 740 threads the bilayer; it reads VIYLTFAPTFLILTISFESFF. Residues 741–775 lie on the Lumenal side of the membrane; it reads YLLFTNYLMLWIEIESKIKAQNIAKNSQNWLQLLR. Residues 776–796 form a helical membrane-spanning segment; the sequence is ISIIGFFLLQFAFFGTGNVAS. Topologically, residues 797–818 are cytoplasmic; sequence ISSFSLDSVYRLMPVFDPFPMG. A helical transmembrane segment spans residues 819–839; the sequence is ALLILKIMIPYILLSTALGIM. The Lumenal portion of the chain corresponds to 840-848; it reads NLKLNIKDY. The helical transmembrane segment at 849-869 threads the bilayer; that stretch reads TVSSLILSTSDVLSLNFFYLL. Residues 870–885 are Cytoplasmic-facing; that stretch reads RTEGSWLDIGVTISNY. Residues 886-906 traverse the membrane as a helical segment; the sequence is CLAILSSLFMIVLELFSHFLL. Over 907-925 the chain is Lumenal; that stretch reads KNVRDNGMDIAASKQQKRH.

The protein belongs to the PIGG/PIGN/PIGO family. PIGN subfamily.

The protein localises to the endoplasmic reticulum membrane. It functions in the pathway glycolipid biosynthesis; glycosylphosphatidylinositol-anchor biosynthesis. Functionally, ethanolamine phosphate transferase involved in glycosylphosphatidylinositol-anchor biosynthesis. Transfers ethanolamine phosphate to the first alpha-1,4-linked mannose of the glycosylphosphatidylinositol precursor of GPI-anchor. In Eremothecium gossypii (strain ATCC 10895 / CBS 109.51 / FGSC 9923 / NRRL Y-1056) (Yeast), this protein is GPI ethanolamine phosphate transferase 1 (MCD4).